The sequence spans 554 residues: Glucose-binding protein GlcS (554 aa).

Residues 1 to 17 are Cytoplasmic-facing; the sequence is MKRKYPYSLAKGLTSTQ. A helical transmembrane segment spans residues 18–38; that stretch reads IAVIVAVIVIVIIIGVVAGFV. Residues 39–525 are Extracellular-facing; that stretch reads LTKGPSTTAV…YGLTNNTQKT (487 aa). A helical membrane pass occupies residues 526 to 546; it reads SNSVMLFLLPFLALPLAIASI. At 547-554 the chain is on the cytoplasmic side; the sequence is DNKYYLLK.

This sequence belongs to the bacterial solute-binding protein 1 family. The complex is composed of two ATP-binding proteins (GlcV), two transmembrane proteins (GlcT and GlcU) and a solute-binding protein (GlcS).

It is found in the cell membrane. Binding of glucose is strongly inhibited by galactose and mannose. Functionally, part of the ABC transporter complex GlcSTUV involved in glucose uptake. Binds glucose. Can also bind galactose and mannose. This is Glucose-binding protein GlcS from Saccharolobus solfataricus (strain ATCC 35092 / DSM 1617 / JCM 11322 / P2) (Sulfolobus solfataricus).